The chain runs to 354 residues: MTNISLTIKAANDQKYAVTVDSESSVLALKEAIAPVADIEKERQRLIYAGRVLKDEESLKTYKIQDGHSIHLVKTLGQNPAAAATNVSDRTQQVPTNIQAGQGANNPLANLTSARYAGFNIPMPSASMFGPNPENPVPPSTEELANMLSNPMVQSSINEMFSNPQMLDMIINSSPHLRNAPPYVRQMMQSPEFRRAMTDPDTMRQMAQLHQQMGAAGIDPMSLMGGGLGGAGLGGLGGAGLGGFGGANNATAGIAGAAPVDQTAAANTIQNLLNNLGGAGFGAGLGDAGLGAGLGGAASPPAPAQDTRPPEERYAEQLSQLNEMGFVDFERNVQALRRSGGNVQGAIESLLSDL.

The 78-residue stretch at 1–78 folds into the Ubiquitin-like domain; sequence MTNISLTIKA…SIHLVKTLGQ (78 aa). In terms of domain architecture, UBA spans 309–353; the sequence is PPEERYAEQLSQLNEMGFVDFERNVQALRRSGGNVQGAIESLLSD.

Functionally, protects ubiquitin chains against dissambly by deubiquitinating enzymes thereby promoting protein degradation. This is Deubiquitination-protection protein dph1 (dph1) from Schizosaccharomyces pombe (strain 972 / ATCC 24843) (Fission yeast).